A 329-amino-acid chain; its full sequence is Cathepsin K (329 aa).

Positions 1–15 (MWGLKVLLLPVVSFA) are cleaved as a signal peptide. Positions 16-114 (LHPEEILDTQ…TLYIPDWEGR (99 aa)) are cleaved as a propeptide — activation peptide. An N-linked (GlcNAc...) asparagine glycan is attached at Asn103. Intrachain disulfides connect Cys136/Cys177 and Cys170/Cys210. Cys139 is an active-site residue. Asn268 carries N-linked (GlcNAc...) asparagine glycosylation. The cysteines at positions 269 and 318 are disulfide-linked. Catalysis depends on residues His276 and Asn296.

The protein belongs to the peptidase C1 family. In terms of tissue distribution, predominantly expressed in osteclasts (bones).

The protein resides in the lysosome. Its subcellular location is the secreted. It localises to the apical cell membrane. The catalysed reaction is Broad proteolytic activity. With small-molecule substrates and inhibitors, the major determinant of specificity is P2, which is preferably Leu, Met &gt; Phe, and not Arg.. In terms of biological role, thiol protease involved in osteoclastic bone resorption and may participate partially in the disorder of bone remodeling. Displays potent endoprotease activity against fibrinogen at acid pH. May play an important role in extracellular matrix degradation. Involved in the release of thyroid hormone thyroxine (T4) by limited proteolysis of TG/thyroglobulin in the thyroid follicle lumen. The sequence is that of Cathepsin K (CTSK) from Oryctolagus cuniculus (Rabbit).